Here is a 399-residue protein sequence, read N- to C-terminus: Probable 2-isopropylmalate synthase (399 aa).

The Pyruvate carboxyltransferase domain occupies 20-272 (VRIFDTTLRD…RTGVNTKLLY (253 aa)). 4 residues coordinate a divalent metal cation: Asp-29, His-210, His-212, and Asn-246.

This sequence belongs to the alpha-IPM synthase/homocitrate synthase family. In terms of assembly, homodimer. The cofactor is a divalent metal cation.

The enzyme catalyses 3-methyl-2-oxobutanoate + acetyl-CoA + H2O = (2S)-2-isopropylmalate + CoA + H(+). The protein operates within amino-acid biosynthesis; L-leucine biosynthesis; L-leucine from 3-methyl-2-oxobutanoate: step 1/4. Functionally, catalyzes the condensation of the acetyl group of acetyl-CoA with 3-methyl-2-oxobutanoate (2-oxoisovalerate) to form 3-carboxy-3-hydroxy-4-methylpentanoate (2-isopropylmalate). The protein is Probable 2-isopropylmalate synthase (leuA) of Ignicoccus hospitalis (strain KIN4/I / DSM 18386 / JCM 14125).